An 805-amino-acid chain; its full sequence is Leucine--tRNA ligase (805 aa).

The 'HIGH' region signature appears at 40–51 (PYPSGQGLHVGH). Residues 577–581 (KMSKS) carry the 'KMSKS' region motif. Lys-580 serves as a coordination point for ATP.

This sequence belongs to the class-I aminoacyl-tRNA synthetase family.

Its subcellular location is the cytoplasm. The enzyme catalyses tRNA(Leu) + L-leucine + ATP = L-leucyl-tRNA(Leu) + AMP + diphosphate. This Pediococcus pentosaceus (strain ATCC 25745 / CCUG 21536 / LMG 10740 / 183-1w) protein is Leucine--tRNA ligase.